The primary structure comprises 181 residues: Adenine phosphoribosyltransferase (181 aa).

It belongs to the purine/pyrimidine phosphoribosyltransferase family. As to quaternary structure, homodimer.

It is found in the cytoplasm. The enzyme catalyses AMP + diphosphate = 5-phospho-alpha-D-ribose 1-diphosphate + adenine. Its pathway is purine metabolism; AMP biosynthesis via salvage pathway; AMP from adenine: step 1/1. Catalyzes a salvage reaction resulting in the formation of AMP, that is energically less costly than de novo synthesis. This is Adenine phosphoribosyltransferase from Rhodopseudomonas palustris (strain HaA2).